Reading from the N-terminus, the 95-residue chain is Integration host factor subunit beta (95 aa).

Belongs to the bacterial histone-like protein family. As to quaternary structure, heterodimer of an alpha and a beta chain.

This protein is one of the two subunits of integration host factor, a specific DNA-binding protein that functions in genetic recombination as well as in transcriptional and translational control. In Shewanella loihica (strain ATCC BAA-1088 / PV-4), this protein is Integration host factor subunit beta.